The sequence spans 99 residues: Ubiquitin-related modifier 1 homolog (99 aa).

G99 carries the 1-thioglycine modification. Residue G99 forms a Glycyl lysine isopeptide (Gly-Lys) (interchain with K-? in acceptor proteins) linkage.

Belongs to the URM1 family. C-terminal thiocarboxylation occurs in 2 steps, it is first acyl-adenylated (-COAMP) via the hesA/moeB/thiF part of the MOCS3 homolog, then thiocarboxylated (-COSH) via the rhodanese domain of the MOCS3 homolog.

The protein localises to the cytoplasm. Its pathway is tRNA modification; 5-methoxycarbonylmethyl-2-thiouridine-tRNA biosynthesis. Acts as a sulfur carrier required for 2-thiolation of mcm(5)S(2)U at tRNA wobble positions of cytosolic tRNA(Lys), tRNA(Glu) and tRNA(Gln). Serves as sulfur donor in tRNA 2-thiolation reaction by being thiocarboxylated (-COSH) at its C-terminus by MOCS3. The sulfur is then transferred to tRNA to form 2-thiolation of mcm(5)S(2)U. Also acts as a ubiquitin-like protein (UBL) that is covalently conjugated via an isopeptide bond to lysine residues of target proteins. The thiocarboxylated form serves as substrate for conjugation and oxidative stress specifically induces the formation of UBL-protein conjugates. The sequence is that of Ubiquitin-related modifier 1 homolog from Chlamydomonas reinhardtii (Chlamydomonas smithii).